The sequence spans 43 residues: Protein PsbN (43 aa).

Residues 7-27 (VAIFISCLLVSFTGYALYTAF) traverse the membrane as a helical segment.

This sequence belongs to the PsbN family.

It is found in the plastid. The protein resides in the chloroplast thylakoid membrane. Its function is as follows. May play a role in photosystem I and II biogenesis. This Zygnema circumcarinatum (Green alga) protein is Protein PsbN.